We begin with the raw amino-acid sequence, 1304 residues long: Splicing factor 3B subunit 1 (1304 aa).

2 disordered regions span residues 100–119 (QYDPFAEHRPPKIADREDEY) and 124–148 (RTMIISPERLDPFADGGKTPDPKMN). The segment covering 104–119 (FAEHRPPKIADREDEY) has biased composition (basic and acidic residues). A Phosphothreonine modification is found at threonine 125. Serine 129 carries the phosphoserine modification. Lysine 141 carries the N6-acetyllysine modification. Threonine 142 carries the post-translational modification Phosphothreonine. Arginine 157 bears the Citrulline mark. The interval 172–360 (LAEKAKAGEL…PVLTPGKTPI (189 aa)) is disordered. At serine 194 the chain carries Phosphoserine. 3 positions are modified to phosphothreonine: threonine 203, threonine 207, and threonine 211. At lysine 214 the chain carries N6-acetyllysine; alternate. Lysine 214 participates in a covalent cross-link: Glycyl lysine isopeptide (Lys-Gly) (interchain with G-Cter in SUMO2); alternate. 2 positions are modified to phosphothreonine: threonine 223 and threonine 227. Residues 223 to 491 (TPGHTPSLRW…VDESTLSPEE (269 aa)) form an interaction with PPP1R8 region. Serine 229 carries the post-translational modification Phosphoserine. Residues 231 to 241 (RWDETPGRAKG) show a composition bias toward basic and acidic residues. Residues threonine 235, threonine 244, threonine 248, threonine 257, threonine 261, threonine 267, threonine 273, and threonine 278 each carry the phosphothreonine modification. Serine 287 carries the phosphoserine modification. Basic and acidic residues predominate over residues 291–304 (NRWDETPKTERDTP). Phosphothreonine is present on residues threonine 296, threonine 299, threonine 303, and threonine 313. Position 322 is a phosphoserine (serine 322). A phosphothreonine mark is found at threonine 326 and threonine 328. Serine 332 is modified (phosphoserine). A Phosphothreonine modification is found at threonine 341. Over residues 342-352 (PASQMGGSTPV) the composition is skewed to polar residues. Phosphoserine is present on residues serine 344 and serine 349. 2 positions are modified to phosphothreonine: threonine 350 and threonine 354. Serine 400 is subject to Phosphoserine. Residue lysine 413 forms a Glycyl lysine isopeptide (Lys-Gly) (interchain with G-Cter in SUMO2); alternate linkage. Lysine 413 is covalently cross-linked (Glycyl lysine isopeptide (Lys-Gly) (interchain with G-Cter in SUMO1); alternate). Position 426 is a phosphothreonine (threonine 426). Residue lysine 430 forms a Glycyl lysine isopeptide (Lys-Gly) (interchain with G-Cter in SUMO2) linkage. Residue threonine 434 is modified to Phosphothreonine; by DYRK1A. The residue at position 436 (threonine 436) is a Phosphothreonine. Residue serine 488 is modified to Phosphoserine. HEAT repeat units follow at residues 529–568 (GPLFNQILPLLMSPTLEDQERHLLVKVIDRILYKLDDLVR), 569–603 (PYVHKILVVIEPLLIDEDYYARVEGREIISNLAKA), 604–641 (AGLATMISTMRPDIDNMDEYVRNTTARAFAVVASALGI), 643–677 (SLLPFLKAVCKSKKSWQARHTGIKIVQQIAILMGC), 680–718 (LPHLRSLVEIIEHGLVDEQQKVRTISALAIAALAEAATP), 763–801 (NYYTREVMLILIREFQSPDEEMKKIVLKVVKQCCGTDGV), 843–881 (KVGAAEIISRIVDDLKDEAEQYRKMVMETIEKIMGNLGA), 1010–1048 (TPPIKDLLPRLTPILKNRHEKVQENCIDLVGRIADRGAE), 1052–1090 (AREWMRICFELLELLKAHKKAIRRATVNTFGYIAKAIGP), 1122–1160 (TCSPFTVLPALMNEYRVPELNVQNGVLKSLSFLFEYIGE), and 1163–1201 (KDYIYAVTPLLEDALMDRDLVHRQTASAVVQHMSLGVYG). The segment at 547 to 550 (QERH) is interaction with PHF5A. Residues lysine 554 and lysine 562 each carry the N6-acetyllysine modification. The segment at 1156-1157 (EY) is interaction with PHF5A. The segment at 1248-1304 (QYCLQGLFHPARKVRDVYWKIYNSIYIGSQDALIAHYPRIYNDDKNTYIRYDLDYIL) is interaction with SF3B3 and SF3B5.

This sequence belongs to the SF3B1 family. Component of the 17S U2 SnRNP complex, a ribonucleoprotein complex that contains small nuclear RNA (snRNA) U2 and a number of specific proteins. Part of the SF3B subcomplex of the 17S U2 SnRNP complex. SF3B associates with the splicing subcomplex SF3A and a 12S RNA unit to form the U2 small nuclear ribonucleoproteins complex (U2 snRNP). Within the SF3B complex, interacts directly (via HEAT domain) with SF3B3, SF3B5, SF3B6 and (via HEAT domain) with PHF5A. The SF3B subcomplex interacts with U2AF2. Identified in the spliceosome C complex. Component of the minor (U12-type spliceosome) spliceosome. Within the minor spliceosome complex, interacts with SCNM1 and CRIPT. Component of the B-WICH complex, at least composed of SMARCA5/SNF2H, BAZ1B/WSTF, SF3B1, DEK, MYO1C, ERCC6, MYBBP1A and DDX21. Phosphorylated form interacts with PPP1R8. Interacts with PQBP1. Interacts with RBM17. Interacts with RBM39. Interacts with SETX. Interacts with RBM15. Interacts with USH1G. Interacts with SDE2. Interacts with U2AF1. Interacts with CACTIN. Interacts with ZRSR1. Interacts with CYREN. Post-translationally, phosphorylated. Phosphorylation occurs concomitantly with the splicing catalytic steps. Phosphorylation on Thr-244, Thr-248 and Thr-313 by cyclin-dependent kinases promotes interaction with PPP1R8 during mitosis. In terms of processing, citrullinated by PADI4. In terms of tissue distribution, ubiquitous.

It localises to the nucleus. The protein resides in the nucleus speckle. Functionally, component of the 17S U2 SnRNP complex of the spliceosome, a large ribonucleoprotein complex that removes introns from transcribed pre-mRNAs. The 17S U2 SnRNP complex (1) directly participates in early spliceosome assembly and (2) mediates recognition of the intron branch site during pre-mRNA splicing by promoting the selection of the pre-mRNA branch-site adenosine, the nucleophile for the first step of splicing. Within the 17S U2 SnRNP complex, SF3B1 is part of the SF3B subcomplex, which is required for 'A' complex assembly formed by the stable binding of U2 snRNP to the branchpoint sequence in pre-mRNA. Sequence independent binding of SF3A and SF3B subcomplexes upstream of the branch site is essential, it may anchor U2 snRNP to the pre-mRNA. May also be involved in the assembly of the 'E' complex. Also acts as a component of the minor spliceosome, which is involved in the splicing of U12-type introns in pre-mRNAs. Together with other U2 snRNP complex components may also play a role in the selective processing of microRNAs (miRNAs) from the long primary miRNA transcript, pri-miR-17-92. The chain is Splicing factor 3B subunit 1 from Mus musculus (Mouse).